A 131-amino-acid polypeptide reads, in one-letter code: Global transcriptional regulator Spx 1 (131 aa).

The cysteines at positions 10 and 13 are disulfide-linked.

Belongs to the ArsC family. Spx subfamily. In terms of assembly, interacts with the C-terminal domain of the alpha subunit of the RNAP.

It localises to the cytoplasm. Global transcriptional regulator that plays a key role in stress response and exerts either positive or negative regulation of genes. Acts by interacting with the C-terminal domain of the alpha subunit of the RNA polymerase (RNAP). This interaction can enhance binding of RNAP to the promoter region of target genes and stimulate their transcription, or block interaction of RNAP with activator. In Oceanobacillus iheyensis (strain DSM 14371 / CIP 107618 / JCM 11309 / KCTC 3954 / HTE831), this protein is Global transcriptional regulator Spx 1.